Consider the following 142-residue polypeptide: MKTFVAKPETVKRDWYVVDATGKTLGRLGHELARRLRGKHKAEYTPHVDTGDYIVVINAEKVAVTGNKETDKLYYWHTGYVGGIKQATFKEMIARRPEAVIEIAVKGMLPKGPLGRAMFRKLKVYAGSEHNHAAQQPQVLDI.

This sequence belongs to the universal ribosomal protein uL13 family. In terms of assembly, part of the 50S ribosomal subunit.

In terms of biological role, this protein is one of the early assembly proteins of the 50S ribosomal subunit, although it is not seen to bind rRNA by itself. It is important during the early stages of 50S assembly. The sequence is that of Large ribosomal subunit protein uL13 from Histophilus somni (Haemophilus somnus).